The sequence spans 510 residues: NAD(P)H-quinone oxidoreductase subunit 2 A, chloroplastic (510 aa).

13 helical membrane-spanning segments follow: residues 26-46 (LFDG…ILLL), 57-77 (IPWF…ALLF), 99-119 (IFQF…VEYI), 124-144 (MAIT…MFLC), 149-169 (LITI…LSGY), 183-203 (YLLM…WLYG), 227-247 (PGIS…LSPA), 295-315 (WHPL…LIAI), 323-342 (MLAY…IIVG), 354-374 (YMLF…LFGL), 395-415 (ALSL…AGFF), 418-438 (LHLF…IGLF), and 484-504 (MIVC…IIAI).

This sequence belongs to the complex I subunit 2 family. As to quaternary structure, NDH is composed of at least 16 different subunits, 5 of which are encoded in the nucleus.

It is found in the plastid. It localises to the chloroplast thylakoid membrane. The enzyme catalyses a plastoquinone + NADH + (n+1) H(+)(in) = a plastoquinol + NAD(+) + n H(+)(out). It catalyses the reaction a plastoquinone + NADPH + (n+1) H(+)(in) = a plastoquinol + NADP(+) + n H(+)(out). NDH shuttles electrons from NAD(P)H:plastoquinone, via FMN and iron-sulfur (Fe-S) centers, to quinones in the photosynthetic chain and possibly in a chloroplast respiratory chain. The immediate electron acceptor for the enzyme in this species is believed to be plastoquinone. Couples the redox reaction to proton translocation, and thus conserves the redox energy in a proton gradient. This is NAD(P)H-quinone oxidoreductase subunit 2 A, chloroplastic from Oenothera biennis (German evening primrose).